Here is a 152-residue protein sequence, read N- to C-terminus: Large ribosomal subunit protein uL22 (152 aa).

It belongs to the universal ribosomal protein uL22 family. As to quaternary structure, part of the 50S ribosomal subunit.

This protein binds specifically to 23S rRNA. It makes multiple contacts with different domains of the 23S rRNA in the assembled 50S subunit and ribosome. Functionally, the globular domain of the protein is located near the polypeptide exit tunnel on the outside of the subunit, while an extended beta-hairpin is found that lines the wall of the exit tunnel in the center of the 70S ribosome. In Cenarchaeum symbiosum (strain A), this protein is Large ribosomal subunit protein uL22.